The sequence spans 246 residues: Trypsin-5 (246 aa).

Positions 1–15 (MNSLLFLALVGAAVA) are cleaved as a signal peptide. A propeptide spans 16-23 (FPVDDDDK) (activation peptide). A Peptidase S1 domain is found at 24–244 (IVGGYTCREN…YVDWIQDTIA (221 aa)). A disulfide bridge links Cys48 with Cys64. Catalysis depends on charge relay system residues His63 and Asp107. Cystine bridges form between Cys139–Cys206, Cys171–Cys185, and Cys196–Cys220. The Charge relay system role is filled by Ser200.

It belongs to the peptidase S1 family. Post-translationally, proteolytically cleaved and activated by an autocatalytic mechanism. Cleavage by CTRC inhibits autoactivation. Expressed in the heart, lung, brain, kidney, liver, epididymis, ovary and uterus. Expression in the testis is limited to round and elongating spermatids.

It is found in the cytoplasmic vesicle. It localises to the secretory vesicle. Its subcellular location is the acrosome. It carries out the reaction Preferential cleavage: Arg-|-Xaa, Lys-|-Xaa.. Activated by autocatalytic cleavage. Cleavage by CTRC inhibits autoactivation. Its function is as follows. Serine protease capable of autoactivation. In Mus musculus (Mouse), this protein is Trypsin-5.